A 177-amino-acid chain; its full sequence is Protein-export protein SecB (177 aa).

The protein belongs to the SecB family. In terms of assembly, homotetramer, a dimer of dimers. One homotetramer interacts with 1 SecA dimer.

The protein resides in the cytoplasm. In terms of biological role, one of the proteins required for the normal export of preproteins out of the cell cytoplasm. It is a molecular chaperone that binds to a subset of precursor proteins, maintaining them in a translocation-competent state. It also specifically binds to its receptor SecA. The polypeptide is Protein-export protein SecB (Ehrlichia canis (strain Jake)).